The chain runs to 485 residues: Endo-1,4-beta-xylanase C (485 aa).

The signal sequence occupies residues 1 to 19 (MKFLQIIPVLLSLTSTTLA). The GH11 domain maps to 34–234 (KETGNKVGTI…GNGGVSGTAD (201 aa)). N-linked (GlcNAc...) asparagine glycosylation is found at N56 and N107. E128 acts as the Nucleophile in catalysis. The N-linked (GlcNAc...) asparagine glycan is linked to N175. Residue E221 is the Proton donor of the active site. A disordered region spans residues 250-450 (ASPAPAGGAP…PQNASDGGNC (201 aa)). Composition is skewed to low complexity over residues 265 to 330 (AGND…QGQH) and 344 to 354 (GSDFNNWSQGG). Tandem repeats lie at residues 275–280 (GQQPPQ), 281–286 (GQQPPQ), 287–292 (GQQPPQ), 293–298 (GQQPPQ), 299–304 (GQQPPQ), 310–315 (GQQPPQ), and 316–321 (GQQPPQ). A 7 X 6 AA tandem repeats of G-Q-Q-P-P-Q region spans residues 275-321 (GQQPPQGQQPPQGQQPPQGQQPPQGQQPPQGNDQQGQQPPQGQQPPQ). N-linked (GlcNAc...) asparagine glycosylation occurs at N349. 8 repeat units span residues 353–361 (GGSPWGGNQ), 362–370 (GGSPWGGNQ), 371–379 (GGNPWGGNQ), 380–388 (GGSPWGGNQ), 389–397 (GGSPWGQGN), 399–407 (GGNPWGGNQ), 408–416 (GGSPWGGNQ), and 417–425 (GGNPWGGNQ). Residues 353-425 (GGSPWGGNQG…QGGNPWGGNQ (73 aa)) form an 8 X 9 AA tandem repeats of G-G-[SN]-P-W-G-G-N-Q region. Positions 355 to 425 (SPWGGNQGGS…QGGNPWGGNQ (71 aa)) are enriched in gly residues. Over residues 426–445 (WGAPQNAAAPQSAAAPQNAS) the composition is skewed to low complexity. An N-linked (GlcNAc...) asparagine glycan is attached at N443. The region spanning 449 to 484 (NCASLWGQCGGQGYNGPSCCSEGSCKPINEYFHQCQ) is the CBM1 domain.

The protein belongs to the glycosyl hydrolase 11 (cellulase G) family.

It localises to the secreted. It catalyses the reaction Endohydrolysis of (1-&gt;4)-beta-D-xylosidic linkages in xylans.. It functions in the pathway glycan degradation; xylan degradation. Functionally, endo-1,4-beta-xylanase involved in the hydrolysis of xylan, a major structural heterogeneous polysaccharide found in plant biomass representing the second most abundant polysaccharide in the biosphere, after cellulose. The protein is Endo-1,4-beta-xylanase C (xynC) of Neocallimastix patriciarum (Rumen fungus).